Here is a 721-residue protein sequence, read N- to C-terminus: Dolichyl-diphosphooligosaccharide--protein glycosyltransferase subunit STT3B (721 aa).

Topologically, residues 1 to 25 are cytoplasmic; the sequence is MAAATALDSLPAPLRSLRLKTKQQE. A helical membrane pass occupies residues 26–46; sequence LLLRVSALALIYVLAFVVRLF. Over 47 to 129 the chain is Lumenal; it reads SVLRYESMIH…VHIREVCVLT (83 aa). The short motif at 57–59 is the DXD motif 1 element; sequence EFD. Residue aspartate 59 participates in Mn(2+) binding. The helical transmembrane segment at 130–148 threads the bilayer; that stretch reads APFFAANTTLVAYAFGREI. The Cytoplasmic segment spans residues 149–150; sequence WD. Residues 151–168 traverse the membrane as a helical segment; it reads SGAGLVAAALIAVCPGYI. The Lumenal portion of the chain corresponds to 169 to 179; sequence SRSVAGSYDNE. Residues aspartate 177 and glutamate 179 each coordinate Mn(2+). The DXD motif 2 signature appears at 177–179; the sequence is DNE. A helical transmembrane segment spans residues 180–199; the sequence is GVAIFALLLTFYLFVRAVNT. Residues 200–201 lie on the Cytoplasmic side of the membrane; that stretch reads GS. Residues 202 to 216 traverse the membrane as a helical segment; the sequence is LAWSLASAFGYFYMV. The Lumenal segment spans residues 217–221; it reads SAWGG. A helical membrane pass occupies residues 222–238; sequence YVFIINLLPLYVLVLLV. The Cytoplasmic segment spans residues 239-243; it reads TGRYS. The chain crosses the membrane as a helical span at residues 244-269; the sequence is QRLYVAYNSTYVLGMLLAMQIRFVGF. Topologically, residues 270–277 are lumenal; sequence QHVQSGEH. A helical transmembrane segment spans residues 278–297; the sequence is MAAMGVFFLLQVFFFLDWVK. The Cytoplasmic segment spans residues 298–313; it reads YLLNDAKLFKSFLRIT. Residues 314-334 form a helical membrane-spanning segment; it reads LTCVITVGTLALGIGTASGYI. Topologically, residues 335–367 are lumenal; the sequence is SPWTGRFYSLLDPTYAKDHIPIIASVSEHQPTA. An SVSE motif motif is present at residues 359 to 362; sequence SVSE. Residues 368–390 traverse the membrane as a helical segment; it reads WSSFMFDFHILLFLFPAGLYFCF. Residues 391–396 lie on the Cytoplasmic side of the membrane; it reads KRLSDA. Residues 397 to 413 traverse the membrane as a helical segment; sequence TIFIVMYGLTSMYFAGV. Residues 414–417 are Lumenal-facing; that stretch reads MVRL. Arginine 416 provides a ligand contact to dolichyl diphosphooligosaccharide. A helical transmembrane segment spans residues 418–439; that stretch reads ILVAAPAVCLISAIAASATIKN. Over 440–471 the chain is Cytoplasmic; that stretch reads LTTLIRTKSKSPQTVSGKSSGSKAAAKGAVDQ. The helical transmembrane segment at 472 to 492 threads the bilayer; the sequence is SLPFQQNVAIALLLGAFYLLS. The Lumenal segment spans residues 493 to 721; it reads RYAVHCTWVT…YKVKPPKNRS (229 aa). The interval 548–550 is interacts with target acceptor peptide in protein substrate; the sequence is WWD. The short motif at 548-552 is the WWDYG motif element; that stretch reads WWDYG. Tyrosine 553 is a dolichyl diphosphooligosaccharide binding site. 2 N-linked (GlcNAc...) asparagine glycosylation sites follow: asparagine 560 and asparagine 567. The N-linked (GlcNAc...) (high mannose) asparagine glycan is linked to asparagine 571. The short motif at 615–622 is the DK motif element; the sequence is DINKFLWM.

This sequence belongs to the STT3 family. Component of the oligosaccharyltransferase (OST) complex. It depends on Mg(2+) as a cofactor. Mn(2+) is required as a cofactor.

The protein resides in the endoplasmic reticulum membrane. It catalyses the reaction a di-trans,poly-cis-dolichyl diphosphooligosaccharide + L-asparaginyl-[protein] = N(4)-(oligosaccharide-(1-&gt;4)-N-acetyl-beta-D-glucosaminyl-(1-&gt;4)-N-acetyl-beta-D-glucosaminyl)-L-asparaginyl-[protein] + a di-trans,poly-cis-dolichyl diphosphate + H(+). It functions in the pathway protein modification; protein glycosylation. Catalytic subunit of the oligosaccharyl transferase (OST) complex that catalyzes the initial transfer of a defined glycan (Glc(3)Man(9)GlcNAc(2) in eukaryotes) from the lipid carrier dolichol-pyrophosphate to an asparagine residue within an Asn-X-Ser/Thr consensus motif in nascent polypeptide chains, the first step in protein N-glycosylation. N-glycosylation occurs cotranslationally and the complex associates with the Sec61 complex at the channel-forming translocon complex that mediates protein translocation across the endoplasmic reticulum (ER). All subunits are required for a maximal enzyme activity. This subunit contains the active site and the acceptor peptide and donor lipid-linked oligosaccharide (LLO) binding pockets. The protein is Dolichyl-diphosphooligosaccharide--protein glycosyltransferase subunit STT3B (STT3B) of Oryza sativa subsp. japonica (Rice).